We begin with the raw amino-acid sequence, 361 residues long: Holliday junction branch migration complex subunit RuvB (361 aa).

Residues 1-12 (MNWDETGPETDE) show a composition bias toward acidic residues. The interval 1 to 21 (MNWDETGPETDEPTGPVLDDR) is disordered. Residues 13–199 (PTGPVLDDRL…FGFTGHMEFY (187 aa)) form a large ATPase domain (RuvB-L) region. ATP contacts are provided by residues Leu38, Arg39, Gly80, Lys83, Thr84, Thr85, 146–148 (EDF), Arg189, Tyr199, and Arg236. Position 84 (Thr84) interacts with Mg(2+). The small ATPAse domain (RuvB-S) stretch occupies residues 200 to 270 (APAELERVLH…IAMAALKVYE (71 aa)). The tract at residues 273 to 361 (ARGLDRLDRA…AKGQQGLFGA (89 aa)) is head domain (RuvB-H). DNA contacts are provided by Arg309, Arg328, and Arg333.

Belongs to the RuvB family. In terms of assembly, homohexamer. Forms an RuvA(8)-RuvB(12)-Holliday junction (HJ) complex. HJ DNA is sandwiched between 2 RuvA tetramers; dsDNA enters through RuvA and exits via RuvB. An RuvB hexamer assembles on each DNA strand where it exits the tetramer. Each RuvB hexamer is contacted by two RuvA subunits (via domain III) on 2 adjacent RuvB subunits; this complex drives branch migration. In the full resolvosome a probable DNA-RuvA(4)-RuvB(12)-RuvC(2) complex forms which resolves the HJ.

Its subcellular location is the cytoplasm. It catalyses the reaction ATP + H2O = ADP + phosphate + H(+). Its function is as follows. The RuvA-RuvB-RuvC complex processes Holliday junction (HJ) DNA during genetic recombination and DNA repair, while the RuvA-RuvB complex plays an important role in the rescue of blocked DNA replication forks via replication fork reversal (RFR). RuvA specifically binds to HJ cruciform DNA, conferring on it an open structure. The RuvB hexamer acts as an ATP-dependent pump, pulling dsDNA into and through the RuvAB complex. RuvB forms 2 homohexamers on either side of HJ DNA bound by 1 or 2 RuvA tetramers; 4 subunits per hexamer contact DNA at a time. Coordinated motions by a converter formed by DNA-disengaged RuvB subunits stimulates ATP hydrolysis and nucleotide exchange. Immobilization of the converter enables RuvB to convert the ATP-contained energy into a lever motion, pulling 2 nucleotides of DNA out of the RuvA tetramer per ATP hydrolyzed, thus driving DNA branch migration. The RuvB motors rotate together with the DNA substrate, which together with the progressing nucleotide cycle form the mechanistic basis for DNA recombination by continuous HJ branch migration. Branch migration allows RuvC to scan DNA until it finds its consensus sequence, where it cleaves and resolves cruciform DNA. The polypeptide is Holliday junction branch migration complex subunit RuvB (Streptomyces griseus subsp. griseus (strain JCM 4626 / CBS 651.72 / NBRC 13350 / KCC S-0626 / ISP 5235)).